Here is a 716-residue protein sequence, read N- to C-terminus: Splicing factor Cactin (716 aa).

Residues 1-104 (MGSHGKGKRD…SKKAQKKALR (104 aa)) form a disordered region. Basic and acidic residues predominate over residues 10-22 (DRSGRQKKRRDES). A compositionally biased stretch (low complexity) spans 25–45 (GSESESYTSDSDGSDDLSPPR). Residues 46–61 (SSRRKKGSSSRRTRRR) show a composition bias toward basic residues. A compositionally biased stretch (basic and acidic residues) spans 81–95 (SSKDYSEEKVTEYMS). Positions 153–201 (SVKAEKRRHRERMTEVEKVKKRREERAVEKARHEEEMALLARERARAEF) form a coiled coil. At serine 450 the chain carries Phosphoserine. Residues 466 to 525 (VEENEEEINDTNLSDAEEAFSPEPVAEEEEADEAAEAAGSFSPELMHGDDREEAIDPEED) form a disordered region. The segment covering 468–500 (ENEEEINDTNLSDAEEAFSPEPVAEEEEADEAA) has biased composition (acidic residues).

The protein belongs to the CACTIN family. In terms of assembly, interacts with At5g63440.

Its subcellular location is the nucleus speckle. Plays a role in pre-mRNA splicing by facilitating excision of a subset of introns. Required for embryogenesis. The polypeptide is Splicing factor Cactin (CTN) (Arabidopsis thaliana (Mouse-ear cress)).